The sequence spans 503 residues: Probable cytochrome P450 6a19 (503 aa).

Cysteine 445 lines the heme pocket.

It belongs to the cytochrome P450 family. It depends on heme as a cofactor.

The protein resides in the endoplasmic reticulum membrane. The protein localises to the microsome membrane. Functionally, may be involved in the metabolism of insect hormones and in the breakdown of synthetic insecticides. In Drosophila melanogaster (Fruit fly), this protein is Probable cytochrome P450 6a19 (Cyp6a19).